The primary structure comprises 122 residues: Large ribosomal subunit protein bL12 (122 aa).

A disordered region spans residues 96–122 (APKSLKTGLSKDEANEMKKKLEDAGAT). Residues 104–122 (LSKDEANEMKKKLEDAGAT) are compositionally biased toward basic and acidic residues.

It belongs to the bacterial ribosomal protein bL12 family. As to quaternary structure, homodimer. Part of the ribosomal stalk of the 50S ribosomal subunit. Forms a multimeric L10(L12)X complex, where L10 forms an elongated spine to which 2 to 4 L12 dimers bind in a sequential fashion. Binds GTP-bound translation factors.

In terms of biological role, forms part of the ribosomal stalk which helps the ribosome interact with GTP-bound translation factors. Is thus essential for accurate translation. In Liberibacter asiaticus (Citrus greening disease), this protein is Large ribosomal subunit protein bL12.